The following is a 189-amino-acid chain: Putative manganese efflux pump MntP (189 aa).

6 consecutive transmembrane segments (helical) span residues 3–23 (LSAT…ASIG), 41–61 (LIFG…GLFA), 65–85 (IMEW…MRMI), 103–123 (GFWL…AIGV), 132–152 (IVHT…LGMM), and 167–187 (ILGG…HLGY).

Belongs to the MntP (TC 9.B.29) family.

Its subcellular location is the cell inner membrane. Functionally, probably functions as a manganese efflux pump. The chain is Putative manganese efflux pump MntP from Serratia proteamaculans (strain 568).